A 397-amino-acid polypeptide reads, in one-letter code: Gamma tubulin complex adapter mto2 (397 aa).

Positions 1–13 (MSEHNYQSDREVA) are enriched in basic and acidic residues. Disordered stretches follow at residues 1 to 44 (MSEH…WRAG), 269 to 298 (YTSS…PFPS), and 346 to 397 (RSDP…TPSP). Composition is skewed to polar residues over residues 22–37 (ASAN…STPR), 269–281 (YTSS…QRMA), 352–369 (RHVS…SPTS), and 382–397 (SPAS…TPSP). Serine 366 and serine 396 each carry phosphoserine.

As to quaternary structure, interacts with mto1; the interaction is direct and required for efficient binding to the gamma-tubulin complex. Interacts with gamma tubulin complex subunits alp4, alp6 and gtb1.

The protein localises to the cytoplasm. It localises to the cytoskeleton. The protein resides in the microtubule organizing center. Its subcellular location is the spindle pole body. Acts together with mto1 to promote nucleation of at least a subset of cytoplasmic microtubules, by recruiting the gamma-tubulin complex to the interphase microtubule organizing center (iMTOC) and to the equatorial MTOC (eMTOC) during anaphase. Does not appear to be required for cytoplasmic astral microtubule nucleation from the spindle pole body (SPB). Required to establish the eMTOC, and thereby to tether the cytokinetic actin ring. This Schizosaccharomyces pombe (strain 972 / ATCC 24843) (Fission yeast) protein is Gamma tubulin complex adapter mto2.